The primary structure comprises 152 residues: 6,7-dimethyl-8-ribityllumazine synthase (152 aa).

5-amino-6-(D-ribitylamino)uracil contacts are provided by residues phenylalanine 22, 54-56 (AFE), and 78-80 (AVI). 83–84 (ET) provides a ligand contact to (2S)-2-hydroxy-3-oxobutyl phosphate. The active-site Proton donor is histidine 86. Phenylalanine 111 contacts 5-amino-6-(D-ribitylamino)uracil. Arginine 125 is a (2S)-2-hydroxy-3-oxobutyl phosphate binding site.

Belongs to the DMRL synthase family.

The catalysed reaction is (2S)-2-hydroxy-3-oxobutyl phosphate + 5-amino-6-(D-ribitylamino)uracil = 6,7-dimethyl-8-(1-D-ribityl)lumazine + phosphate + 2 H2O + H(+). It functions in the pathway cofactor biosynthesis; riboflavin biosynthesis; riboflavin from 2-hydroxy-3-oxobutyl phosphate and 5-amino-6-(D-ribitylamino)uracil: step 1/2. Functionally, catalyzes the formation of 6,7-dimethyl-8-ribityllumazine by condensation of 5-amino-6-(D-ribitylamino)uracil with 3,4-dihydroxy-2-butanone 4-phosphate. This is the penultimate step in the biosynthesis of riboflavin. The polypeptide is 6,7-dimethyl-8-ribityllumazine synthase (Limosilactobacillus reuteri (strain DSM 20016) (Lactobacillus reuteri)).